Here is a 582-residue protein sequence, read N- to C-terminus: SUMO-activating enzyme subunit uba-2 (582 aa).

ATP is bound by residues 20–25 (GAGGIG), Asp44, 52–55 (NLNR), Lys68, 91–92 (SI), and 113–118 (DNRAAR). Residues Cys154 and Cys157 each coordinate Zn(2+). The active-site Glycyl thioester intermediate is the Cys170. The span at 204–214 (SPDMDAVDPDN) shows a compositional bias: acidic residues. The segment at 204–235 (SPDMDAVDPDNTEAVTTEKEKEAMKEEPAPVG) is disordered. A compositionally biased stretch (basic and acidic residues) spans 219-231 (TTEKEKEAMKEEP). Zn(2+) contacts are provided by Cys431 and Cys434. Residues 531-570 (FEVARSEKEPEPDDRKRKADGSEEPEAKRQKVEEKDDKNG) show a composition bias toward basic and acidic residues. Residues 531–582 (FEVARSEKEPEPDDRKRKADGSEEPEAKRQKVEEKDDKNGNEAVAEITETMA) are disordered.

The protein belongs to the ubiquitin-activating E1 family. In terms of assembly, heterodimer with aos-1.

It participates in protein modification; protein sumoylation. The dimeric enzyme acts as an E1 ligase for smo-1. It mediates ATP-dependent activation of smo-1 and formation of a thioester with a conserved cysteine residue on uba-2. The chain is SUMO-activating enzyme subunit uba-2 (uba-2) from Caenorhabditis elegans.